Reading from the N-terminus, the 623-residue chain is Procollagen galactosyltransferase 1 (623 aa).

Residues 1-30 (MAAAPRACKGHGRPLPVLLLLLLLALPPLG) form the signal peptide. N-linked (GlcNAc...) asparagine glycosylation is found at Asn97, Asn185, and Asn382. Residues 589–607 (RAKSQKMREQQALSREAKN) show a composition bias toward basic and acidic residues. The tract at residues 589-623 (RAKSQKMREQQALSREAKNSDVLQSPLDSAARDEL) is disordered. The short motif at 620–623 (RDEL) is the Prevents secretion from ER element.

Belongs to the glycosyltransferase 25 family. Post-translationally, N-glycosylated.

The protein localises to the endoplasmic reticulum lumen. It carries out the reaction (5R)-5-hydroxy-L-lysyl-[collagen] + UDP-alpha-D-galactose = (5R)-5-O-(beta-D-galactosyl)-5-hydroxy-L-lysyl-[collagen] + UDP + H(+). Functionally, beta-galactosyltransferase that transfers beta-galactose to hydroxylysine residues of type I collagen. By acting on collagen glycosylation, facilitates the formation of collagen triple helix. Also involved in the biosynthesis of collagen type IV. This is Procollagen galactosyltransferase 1 (COLGALT1) from Bos taurus (Bovine).